Here is a 166-residue protein sequence, read N- to C-terminus: Cyclic pyranopterin monophosphate synthase (166 aa).

Residues 83–85 (LCH) and 121–122 (ME) each bind substrate. Asp136 is a catalytic residue.

Belongs to the MoaC family. In terms of assembly, homohexamer; trimer of dimers.

It carries out the reaction (8S)-3',8-cyclo-7,8-dihydroguanosine 5'-triphosphate = cyclic pyranopterin phosphate + diphosphate. It participates in cofactor biosynthesis; molybdopterin biosynthesis. Its function is as follows. Catalyzes the conversion of (8S)-3',8-cyclo-7,8-dihydroguanosine 5'-triphosphate to cyclic pyranopterin monophosphate (cPMP). The sequence is that of Cyclic pyranopterin monophosphate synthase from Trichodesmium erythraeum (strain IMS101).